The following is a 231-amino-acid chain: MDDIPDRIEHTVLGPTTTPADVRTCLDEALQYGMRACIPPWAVPLATEYANVPLTAVIDFPHGQGQTDSVCQAAKLAWDAGADELDMVCNVGLLKAGEDDAVRDHITEVVASVPVPVKVIVEAPLLSDAELERVGQLVADADAAYLKTATGFSEGGATVHDVEILSKYLPVKASGGVGSWADAKAMFEAGAERIGASSGDTIVREWQAETAGETVTEPESDRDGADTTDGY.

Aspartate 86 (proton donor/acceptor) is an active-site residue. Lysine 147 (schiff-base intermediate with acetaldehyde) is an active-site residue. Lysine 172 acts as the Proton donor/acceptor in catalysis. The tract at residues 206–231 is disordered; the sequence is WQAETAGETVTEPESDRDGADTTDGY.

This sequence belongs to the DeoC/FbaB aldolase family. DeoC type 1 subfamily.

It is found in the cytoplasm. It catalyses the reaction 2-deoxy-D-ribose 5-phosphate = D-glyceraldehyde 3-phosphate + acetaldehyde. It functions in the pathway carbohydrate degradation; 2-deoxy-D-ribose 1-phosphate degradation; D-glyceraldehyde 3-phosphate and acetaldehyde from 2-deoxy-alpha-D-ribose 1-phosphate: step 2/2. Functionally, catalyzes a reversible aldol reaction between acetaldehyde and D-glyceraldehyde 3-phosphate to generate 2-deoxy-D-ribose 5-phosphate. The protein is Deoxyribose-phosphate aldolase of Haloarcula marismortui (strain ATCC 43049 / DSM 3752 / JCM 8966 / VKM B-1809) (Halobacterium marismortui).